A 250-amino-acid chain; its full sequence is Purine nucleoside phosphorylase BQ2027_MB2173C (250 aa).

Zn(2+) is bound by residues His77, Cys114, and His131.

This sequence belongs to the purine nucleoside phosphorylase YfiH/LACC1 family. Homodimer. Requires Cu(2+) as cofactor. It depends on Zn(2+) as a cofactor.

It catalyses the reaction adenosine + phosphate = alpha-D-ribose 1-phosphate + adenine. It carries out the reaction S-methyl-5'-thioadenosine + phosphate = 5-(methylsulfanyl)-alpha-D-ribose 1-phosphate + adenine. The enzyme catalyses inosine + phosphate = alpha-D-ribose 1-phosphate + hypoxanthine. The catalysed reaction is adenosine + H2O + H(+) = inosine + NH4(+). In terms of biological role, purine nucleoside enzyme that catalyzes the phosphorolysis of adenosine and inosine nucleosides, yielding D-ribose 1-phosphate and the respective free bases, adenine and hypoxanthine. Also catalyzes the phosphorolysis of S-methyl-5'-thioadenosine into adenine and S-methyl-5-thio-alpha-D-ribose 1-phosphate. Also has adenosine deaminase activity. The chain is Purine nucleoside phosphorylase BQ2027_MB2173C from Mycobacterium bovis (strain ATCC BAA-935 / AF2122/97).